The primary structure comprises 86 residues: UPF0297 protein SERP1181 (86 aa).

It belongs to the UPF0297 family.

The protein is UPF0297 protein SERP1181 of Staphylococcus epidermidis (strain ATCC 35984 / DSM 28319 / BCRC 17069 / CCUG 31568 / BM 3577 / RP62A).